The primary structure comprises 285 residues: Cold sensitive U2 snRNA suppressor 2 (285 aa).

An RRM 1 domain is found at 45-130; the sequence is TSIYISGLPT…KQIRVERAQF (86 aa). Positions 135 to 149 are enriched in basic and acidic residues; it reads GDNMHGKENDLKEFN. The tract at residues 135–154 is disordered; it reads GDNMHGKENDLKEFNGPEPP. Ser-163 carries the post-translational modification Phosphoserine. An RRM 2 domain is found at 183 to 265; the sequence is RTVIFANVFN…QKLLAFISGD (83 aa). The tract at residues 265 to 285 is disordered; that stretch reads DENTSSTSDKNEDSEVEDDLI. Residues 276-285 are compositionally biased toward acidic residues; the sequence is EDSEVEDDLI.

It belongs to the HTATSF1 family. In terms of assembly, interacts with PRP11. Associates with the U2 snRNA.

In terms of biological role, U2 snRNP protein which helps to refold U2 into a structure favorable for its binding to SF3b and SF3a prior to spliceosome assembly. Mediates functional interactions between U2 RNA and PRP5. Enforces ATP dependence during formation of the prespliceosome by brokering an interaction between PRP5 and the U2 snRNP that depends on correct U2 RNA structure. This chain is Cold sensitive U2 snRNA suppressor 2 (CUS2), found in Saccharomyces cerevisiae (strain ATCC 204508 / S288c) (Baker's yeast).